Here is a 112-residue protein sequence, read N- to C-terminus: Divalent-cation tolerance protein CutA (112 aa).

Cu cation is bound by residues C16, H83, and H84.

The protein belongs to the CutA family. Homotrimer. Cu cation serves as cofactor.

It is found in the cytoplasm. In terms of biological role, involved in resistance toward heavy metals. The protein is Divalent-cation tolerance protein CutA of Escherichia coli O81 (strain ED1a).